The primary structure comprises 327 residues: Tetraacyldisaccharide 4'-kinase (327 aa).

54–61 (TTGGTGKT) is a binding site for ATP. The interval 78 to 106 (PHILSRGHGGRERGPIGVNPNRSTPRDVG) is disordered.

Belongs to the LpxK family.

It carries out the reaction a lipid A disaccharide + ATP = a lipid IVA + ADP + H(+). It participates in glycolipid biosynthesis; lipid IV(A) biosynthesis; lipid IV(A) from (3R)-3-hydroxytetradecanoyl-[acyl-carrier-protein] and UDP-N-acetyl-alpha-D-glucosamine: step 6/6. Its function is as follows. Transfers the gamma-phosphate of ATP to the 4'-position of a tetraacyldisaccharide 1-phosphate intermediate (termed DS-1-P) to form tetraacyldisaccharide 1,4'-bis-phosphate (lipid IVA). This Gluconobacter oxydans (strain 621H) (Gluconobacter suboxydans) protein is Tetraacyldisaccharide 4'-kinase.